The chain runs to 112 residues: Large ribosomal subunit protein bL20c (112 aa).

Belongs to the bacterial ribosomal protein bL20 family.

Its subcellular location is the plastid. It localises to the chloroplast. Binds directly to 23S ribosomal RNA and is necessary for the in vitro assembly process of the 50S ribosomal subunit. It is not involved in the protein synthesizing functions of that subunit. The sequence is that of Large ribosomal subunit protein bL20c (rpl20) from Anthoceros angustus (Hornwort).